Consider the following 297-residue polypeptide: Light-independent protochlorophyllide reductase iron-sulfur ATP-binding protein (297 aa).

Residues 41–46 and lysine 70 each bind ATP; that span reads GIGKST. Position 45 (serine 45) interacts with Mg(2+). Residues cysteine 126 and cysteine 160 each coordinate [4Fe-4S] cluster. Residues 211–212 and 235–237 each bind ATP; these read NR and PDL.

It belongs to the NifH/BchL/ChlL family. In terms of assembly, homodimer. Protochlorophyllide reductase is composed of three subunits; BchL, BchN and BchB. It depends on [4Fe-4S] cluster as a cofactor.

It carries out the reaction chlorophyllide a + oxidized 2[4Fe-4S]-[ferredoxin] + 2 ADP + 2 phosphate = protochlorophyllide a + reduced 2[4Fe-4S]-[ferredoxin] + 2 ATP + 2 H2O. Its pathway is porphyrin-containing compound metabolism; bacteriochlorophyll biosynthesis (light-independent). Its function is as follows. Component of the dark-operative protochlorophyllide reductase (DPOR) that uses Mg-ATP and reduced ferredoxin to reduce ring D of protochlorophyllide (Pchlide) to form chlorophyllide a (Chlide). This reaction is light-independent. The L component serves as a unique electron donor to the NB-component of the complex, and binds Mg-ATP. In Cereibacter sphaeroides (strain KD131 / KCTC 12085) (Rhodobacter sphaeroides), this protein is Light-independent protochlorophyllide reductase iron-sulfur ATP-binding protein.